The primary structure comprises 429 residues: Histidinol dehydrogenase (429 aa).

The NAD(+) site is built by Tyr127, Gln188, and Asn211. 3 residues coordinate substrate: Ser234, Gln256, and His259. 2 residues coordinate Zn(2+): Gln256 and His259. Active-site proton acceptor residues include Glu324 and His325. Substrate-binding residues include His325, Asp358, Glu412, and His417. Asp358 is a Zn(2+) binding site. Residue His417 coordinates Zn(2+).

Belongs to the histidinol dehydrogenase family. It depends on Zn(2+) as a cofactor.

It carries out the reaction L-histidinol + 2 NAD(+) + H2O = L-histidine + 2 NADH + 3 H(+). The protein operates within amino-acid biosynthesis; L-histidine biosynthesis; L-histidine from 5-phospho-alpha-D-ribose 1-diphosphate: step 9/9. In terms of biological role, catalyzes the sequential NAD-dependent oxidations of L-histidinol to L-histidinaldehyde and then to L-histidine. This is Histidinol dehydrogenase from Bacillus anthracis.